A 1539-amino-acid polypeptide reads, in one-letter code: Lysine-specific demethylase 5D (1539 aa).

The JmjN domain occupies 14–55; it reads CPVFEPSWAEFQDPLGYIAKIRPIAEKSGICKIRPPADWQPP. The region spanning 79–169 is the ARID domain; sequence TRVKLNYLDQ…IIYPYEMFQS (91 aa). Residues 192 to 228 form a disordered region; the sequence is PHSIPLRQSVQPSKFSSYSRRAKRLQPDPEPTEEDIE. The span at 197 to 210 shows a compositional bias: polar residues; the sequence is LRQSVQPSKFSSYS. Glycyl lysine isopeptide (Lys-Gly) (interchain with G-Cter in SUMO2) cross-links involve residues Lys205, Lys229, Lys244, and Lys272. Phosphoserine occurs at positions 291 and 307. The PHD-type 1 zinc finger occupies 316-362; the sequence is ICQVCSRGDEDDKLLFCDGCDDNYHIFCLLPPLPEIPRGIWRCPKCI. A 2-oxoglutarate-binding site is contributed by Tyr430. The JmjC domain maps to 458-624; that stretch reads EYATSGWNLN…AGRQCIEHYR (167 aa). The Fe cation site is built by His504 and Glu506. 2-oxoglutarate-binding residues include Ser512, Asn514, and Lys522. His592 is a Fe cation binding site. The segment at 697-749 adopts a C5HC2 zinc-finger fold; that stretch reads CIKCKTTCFLSALACYDCPDGLVCLSHINDLCKCSSSRQYLRYRYTLDELPTM. Position 884 is a phosphoserine (Ser884). Residues 1174–1235 form a PHD-type 2 zinc finger; that stretch reads ICVCGQVPAG…DTKFLCPLCM (62 aa). Ser1346 is modified (phosphoserine). A disordered region spans residues 1429-1521; the sequence is HQGSRTRSRA…QHKDSGSSAA (93 aa). Basic residues predominate over residues 1432-1446; sequence SRTRSRALERRRRRQ. Over residues 1477 to 1491 the composition is skewed to basic and acidic residues; that stretch reads GREEEHYQEKADREN. The span at 1494–1521 shows a compositional bias: polar residues; sequence LTPSTDHSPFLKGNQNSLQHKDSGSSAA.

The protein belongs to the JARID1 histone demethylase family. As to quaternary structure, interacts with PCGF6, MSH5, ZMYND8, AR. The cofactor is L-ascorbate. It depends on Fe(2+) as a cofactor. In terms of tissue distribution, expression is highly down-regulated in metastatic prostate tumors.

The protein localises to the nucleus. It carries out the reaction N(6),N(6),N(6)-trimethyl-L-lysyl(4)-[histone H3] + 3 2-oxoglutarate + 3 O2 = L-lysyl(4)-[histone H3] + 3 formaldehyde + 3 succinate + 3 CO2. Functionally, histone demethylase that specifically demethylates 'Lys-4' of histone H3, thereby playing a central role in histone code. Does not demethylate histone H3 'Lys-9', H3 'Lys-27', H3 'Lys-36', H3 'Lys-79' or H4 'Lys-20'. Demethylates trimethylated and dimethylated but not monomethylated H3 'Lys-4'. May play a role in spermatogenesis. Involved in transcriptional repression of diverse metastasis-associated genes; in this function seems to cooperate with ZMYND8. Suppresses prostate cancer cell invasion. Regulates androgen receptor (AR) transcriptional activity by demethylating H3K4me3 active transcription marks. This is Lysine-specific demethylase 5D (KDM5D) from Homo sapiens (Human).